We begin with the raw amino-acid sequence, 145 residues long: D-aminoacyl-tRNA deacylase (145 aa).

Positions 137–138 match the Gly-cisPro motif, important for rejection of L-amino acids motif; the sequence is GP.

Belongs to the DTD family. In terms of assembly, homodimer.

Its subcellular location is the cytoplasm. It catalyses the reaction glycyl-tRNA(Ala) + H2O = tRNA(Ala) + glycine + H(+). The enzyme catalyses a D-aminoacyl-tRNA + H2O = a tRNA + a D-alpha-amino acid + H(+). Functionally, an aminoacyl-tRNA editing enzyme that deacylates mischarged D-aminoacyl-tRNAs. Also deacylates mischarged glycyl-tRNA(Ala), protecting cells against glycine mischarging by AlaRS. Acts via tRNA-based rather than protein-based catalysis; rejects L-amino acids rather than detecting D-amino acids in the active site. By recycling D-aminoacyl-tRNA to D-amino acids and free tRNA molecules, this enzyme counteracts the toxicity associated with the formation of D-aminoacyl-tRNA entities in vivo and helps enforce protein L-homochirality. The polypeptide is D-aminoacyl-tRNA deacylase (Shewanella frigidimarina (strain NCIMB 400)).